Consider the following 256-residue polypeptide: Probable succinate transporter subunit YjjP (256 aa).

The Cytoplasmic portion of the chain corresponds to 1–113 (MQTEQQRAVT…KRFSQIQPLR (113 aa)). A helical membrane pass occupies residues 114-135 (YPRWLVALMVGLSCACFCKLNN). Over 136–140 (GGWDG) the chain is Periplasmic. The chain crosses the membrane as a helical span at residues 141 to 158 (AVITFFASTTAMYIRQLL). Over 159 to 168 (AQRHLHPQIN) the chain is Cytoplasmic. A helical membrane pass occupies residues 169-189 (FCLTAFAATTISGLLLQLPTF). Residues 190 to 194 (SNTPT) lie on the Periplasmic side of the membrane. A helical transmembrane segment spans residues 195–215 (IAMAASVLLLVPGFPLINAVA). The Cytoplasmic segment spans residues 216–228 (DMFKGHINTGLAR). A helical transmembrane segment spans residues 229–249 (WAIASLLTLATCVGVVMALTI). Over 250–256 (WGLRGWV) the chain is Periplasmic.

This sequence belongs to the ThrE exporter (TC 2.A.79) family. In terms of assembly, the transporter is composed of YjjB and YjjP.

The protein localises to the cell inner membrane. Involved in succinate export with YjjB. Both proteins are required for export. Contributes to succinate production under both aerobic and anaerobic conditions. This Escherichia coli (strain K12) protein is Probable succinate transporter subunit YjjP (yjjP).